The sequence spans 99 residues: Acylphosphatase (99 aa).

An Acylphosphatase-like domain is found at 5–97; it reads IRQVMVRGRV…YAGERFSILS (93 aa). Catalysis depends on residues Arg20 and Asn38.

This sequence belongs to the acylphosphatase family.

It carries out the reaction an acyl phosphate + H2O = a carboxylate + phosphate + H(+). This is Acylphosphatase (acyP) from Rhodopseudomonas palustris (strain BisB5).